The following is a 535-amino-acid chain: Dimethylaniline monooxygenase [N-oxide-forming] 2 (535 aa).

Ala2 carries the post-translational modification N-acetylalanine. Residues 9–13 (GAGVS), Glu32, 40–41 (LW), and 61–62 (NT) each bind FAD. NADP(+) is bound by residues 60-61 (TN) and 195-198 (SAAD). Lys492 participates in a covalent cross-link: Glycyl lysine isopeptide (Lys-Gly) (interchain with G-Cter in SUMO). Residues 510–530 (APVSFLLKILGLLAVVLAFFF) traverse the membrane as a helical segment.

The protein belongs to the FMO family. FAD serves as cofactor. Requires Mg(2+) as cofactor.

It localises to the microsome membrane. Its subcellular location is the endoplasmic reticulum membrane. Functionally, catalyzes the oxidative metabolism of numerous xenobiotics, including mainly therapeutic drugs and insecticides that contain a soft nucleophile, most commonly nitrogen and sulfur and participates to their bioactivation. Catalyzes the S-oxygenation of the prodrug ethionamide (ETA) to the S-oxide (ETASO), the first step in its bioactivation following by the second oxygenation to the sulfinic acid but to a lesser extend. The polypeptide is Dimethylaniline monooxygenase [N-oxide-forming] 2 (Mus musculus (Mouse)).